The following is a 197-amino-acid chain: Wadjet protein JetB (197 aa).

Its function is as follows. Component of antiplasmid transformation system Wadjet type I, composed of JetA, JetB, JetC and JetD. Expression of Wadjet type I in B.subtilis (strain BEST7003) reduces the transformation efficiency of plasmid pHCMC05. This is Wadjet protein JetB from Bacillus cereus (strain Q1).